Here is a 384-residue protein sequence, read N- to C-terminus: Dual-specificity RNA methyltransferase RlmN (384 aa).

The active-site Proton acceptor is Glu93. Residues 99 to 339 (EETRGTLCVS…TTIRKTRGDD (241 aa)) enclose the Radical SAM core domain. A disulfide bond links Cys106 and Cys344. [4Fe-4S] cluster is bound by residues Cys113, Cys117, and Cys120. Residues 170 to 171 (GE), Ser202, 224 to 226 (SLH), and Asn301 each bind S-adenosyl-L-methionine. Residue Cys344 is the S-methylcysteine intermediate of the active site.

It belongs to the radical SAM superfamily. RlmN family. [4Fe-4S] cluster is required as a cofactor.

It is found in the cytoplasm. The enzyme catalyses adenosine(2503) in 23S rRNA + 2 reduced [2Fe-2S]-[ferredoxin] + 2 S-adenosyl-L-methionine = 2-methyladenosine(2503) in 23S rRNA + 5'-deoxyadenosine + L-methionine + 2 oxidized [2Fe-2S]-[ferredoxin] + S-adenosyl-L-homocysteine. The catalysed reaction is adenosine(37) in tRNA + 2 reduced [2Fe-2S]-[ferredoxin] + 2 S-adenosyl-L-methionine = 2-methyladenosine(37) in tRNA + 5'-deoxyadenosine + L-methionine + 2 oxidized [2Fe-2S]-[ferredoxin] + S-adenosyl-L-homocysteine. Functionally, specifically methylates position 2 of adenine 2503 in 23S rRNA and position 2 of adenine 37 in tRNAs. m2A2503 modification seems to play a crucial role in the proofreading step occurring at the peptidyl transferase center and thus would serve to optimize ribosomal fidelity. The sequence is that of Dual-specificity RNA methyltransferase RlmN from Cupriavidus pinatubonensis (strain JMP 134 / LMG 1197) (Cupriavidus necator (strain JMP 134)).